The following is a 351-amino-acid chain: Histidine protein kinase SaeS (351 aa).

A run of 2 helical transmembrane segments spans residues 9–29 (IIIGVVSSIPLTSTILAIAYI) and 40–60 (TLTLTTIITSCLTLLICSIFI). In terms of domain architecture, HAMP spans 61 to 114 (NPLIQKIKQFNIKTKQFANGNYASNDKTFNSPKEIYELNQSFNKMASEITQQMN). The Histidine kinase domain maps to 129–348 (NLAHDLKTPL…TMTVTLHKLD (220 aa)). Histidine 132 is subject to Phosphohistidine; by autocatalysis.

In terms of processing, autophosphorylated.

The protein resides in the cell membrane. It catalyses the reaction ATP + protein L-histidine = ADP + protein N-phospho-L-histidine.. Its function is as follows. Member of the two-component regulatory system SaeR/SaeS involved in the regulation of staphylococcal virulence factors in a strain-dependent fashion. Probably functions as a membrane-associated protein kinase that upon sensing the appropriate signal, autophosphorylates and in turn activates the cytosolic response regulator SaeR. SaeR/SaeS activates the expression of exoproteins involved in adhesion and invasion of host cells, including hemolysins (hla, hlb, hlgC), coa, DNase, spa and cell wall-associated proteins (emp, eap, fnbA, fnbB, efb). Represses the expression of type 5 capsular polysaccharide (cap operon). Also modulates the expression of several other genes. The chain is Histidine protein kinase SaeS (saeS) from Staphylococcus aureus (strain Newman).